The following is a 75-amino-acid chain: UPF0346 protein LSL_0716 (75 aa).

It belongs to the UPF0346 family.

The protein is UPF0346 protein LSL_0716 of Ligilactobacillus salivarius (strain UCC118) (Lactobacillus salivarius).